Here is a 328-residue protein sequence, read N- to C-terminus: L-tyrosine isonitrile synthase (328 aa).

This sequence belongs to the isocyanide synthase family. Monomer in solution.

The catalysed reaction is D-ribulose 5-phosphate + L-tyrosine = (2S)-3-(4-hydroxyphenyl)-2-isocyanopropanoate + hydroxyacetone + formaldehyde + phosphate + H2O + H(+). Its function is as follows. Involved in the biosynthesis of paerucumarin, a cyclized isocyano derivative of tyrosine. Responsible for the synthesis of the isonitrile group on tyrosine using the C2 of ribulose 5-phosphate as the source of the carbon atom. The chain is L-tyrosine isonitrile synthase from Pseudomonas aeruginosa (strain ATCC 15692 / DSM 22644 / CIP 104116 / JCM 14847 / LMG 12228 / 1C / PRS 101 / PAO1).